Consider the following 119-residue polypeptide: Protein BEX4 (119 aa).

The tract at residues 1-53 (MESKEELAANNLNGENAQQENEGREQAPTQNEETRHLGGGEGQKPGGNIRRGR) is disordered. The segment covering 8 to 20 (AANNLNGENAQQE) has biased composition (low complexity). Residues 31–89 (NEETRHLGGGEGQKPGGNIRRGRVRRLVPNFRWAIPNRHIEHNEARDDVERFVGQMMEI) form an interaction with SIRT2 region. The interaction with alpha-tubulin stretch occupies residues 31–119 (NEETRHLGGG…DNHYDFCLIP (89 aa)). C116 is a binding site for Zn(2+).

It belongs to the BEX family. Interacts with alpha-tubulin. Interacts with SIRT2. In terms of processing, ubiquitinated and degraded by the proteasome.

Its subcellular location is the cytoplasm. It is found in the cytoskeleton. The protein resides in the spindle pole. The protein localises to the nucleus. Functionally, may play a role in microtubule deacetylation by negatively regulating the SIRT2 deacetylase activity toward alpha-tubulin and thereby participate in the control of cell cycle progression and genomic stability. In absence of reductive stress, acts as a pseudosubstrate for the CRL2(FEM1B) complex: associates with FEM1B via zinc, thereby preventing association between FEM1B and its substrates. The chain is Protein BEX4 from Pongo abelii (Sumatran orangutan).